Reading from the N-terminus, the 35-residue chain is Potassium channel toxin alpha-KTx 23.2 (35 aa).

3 cysteine pairs are disulfide-bonded: Cys6-Cys26, Cys12-Cys31, and Cys16-Cys33.

The protein belongs to the short scorpion toxin superfamily. Potassium channel inhibitor family. Alpha-KTx 23 subfamily. Expressed by the venom gland.

The protein localises to the secreted. Its function is as follows. Selectively and irreversibly binds (K(d)=2.9 pM) and blocks Kv1.3/KCNA3 potassium channels of human T-lymphocytes. Weakly blocks Kv1.2/KCNA2 (9%). In Vaejovis mexicanus smithi (Mexican scorpion), this protein is Potassium channel toxin alpha-KTx 23.2.